A 212-amino-acid chain; its full sequence is Protein-L-isoaspartate O-methyltransferase (212 aa).

The active site involves serine 60.

It belongs to the methyltransferase superfamily. L-isoaspartyl/D-aspartyl protein methyltransferase family.

It localises to the cytoplasm. It carries out the reaction [protein]-L-isoaspartate + S-adenosyl-L-methionine = [protein]-L-isoaspartate alpha-methyl ester + S-adenosyl-L-homocysteine. Its function is as follows. Catalyzes the methyl esterification of L-isoaspartyl residues in peptides and proteins that result from spontaneous decomposition of normal L-aspartyl and L-asparaginyl residues. It plays a role in the repair and/or degradation of damaged proteins. This Methanococcus maripaludis (strain C5 / ATCC BAA-1333) protein is Protein-L-isoaspartate O-methyltransferase.